A 429-amino-acid polypeptide reads, in one-letter code: Glutamyl-tRNA reductase (429 aa).

Residues 52–55, Ser110, 115–117, and Gln121 contribute to the substrate site; these read TCNR and EAQ. The active-site Nucleophile is Cys53. 190–195 serves as a coordination point for NADP(+); that stretch reads GAGAMI.

The protein belongs to the glutamyl-tRNA reductase family. As to quaternary structure, homodimer.

It carries out the reaction (S)-4-amino-5-oxopentanoate + tRNA(Glu) + NADP(+) = L-glutamyl-tRNA(Glu) + NADPH + H(+). It functions in the pathway porphyrin-containing compound metabolism; protoporphyrin-IX biosynthesis; 5-aminolevulinate from L-glutamyl-tRNA(Glu): step 1/2. Catalyzes the NADPH-dependent reduction of glutamyl-tRNA(Glu) to glutamate 1-semialdehyde (GSA). The polypeptide is Glutamyl-tRNA reductase (Verminephrobacter eiseniae (strain EF01-2)).